Here is a 215-residue protein sequence, read N- to C-terminus: Large ribosomal subunit protein uL3 (215 aa).

Glutamine 156 is modified (N5-methylglutamine).

It belongs to the universal ribosomal protein uL3 family. Part of the 50S ribosomal subunit. Forms a cluster with proteins L14 and L19. Methylated by PrmB.

Functionally, one of the primary rRNA binding proteins, it binds directly near the 3'-end of the 23S rRNA, where it nucleates assembly of the 50S subunit. The chain is Large ribosomal subunit protein uL3 from Xylella fastidiosa (strain M23).